Consider the following 348-residue polypeptide: L-asparaginase 2 (348 aa).

A signal peptide spans 1-22 (MEFFKKTALAALVMGFSGAALA). Residues 24–348 (PNITILATGG…QQIQQIFNQY (325 aa)) form the Asparaginase/glutaminase domain. Threonine 34 functions as the O-isoaspartyl threonine intermediate in the catalytic mechanism. Substrate contacts are provided by residues 80-81 (SQ) and 111-112 (TD). A disulfide bridge connects residues cysteine 99 and cysteine 127.

It belongs to the asparaginase 1 family. As to quaternary structure, homotetramer.

It is found in the periplasm. The enzyme catalyses L-asparagine + H2O = L-aspartate + NH4(+). The protein is L-asparaginase 2 (ansB) of Escherichia coli (strain K12).